Consider the following 512-residue polypeptide: MKKIQFFDTTLRDGEQTPGVNFDVKEKIQIALQLEKLGIDVIEAGFPISSPGDFECVRAIAKAIKHCSVTGLARCVEGDIDRAEEALKEAVSPQIHIFLATSDVHMEYKLKMSRAEVLASIKHHIHYARQKFDIVQFSPEDATRSDRAFLIEAVQTAIDAGATVINIPDTVGYTNPTEFGQLFQDLRREIKQFDDIIFASHCHDDLGMATANALAAIENGARRVEGTINGIGERAGNTALEEVAVALHIRKDFYQAETNIVLNQFKNSSDLISRLSGMPVPRNKAVIGGNAYAHESGIHQDGVLKNPDTYEIITPALVGVDKNSLPLGKLSGKHAFHTRMEEMGYTLSEQELKDTFKRFKQLADAKKEVTEEDLHALILGQSSESTDNFELKHLQVQYVSGGVQGAIVRIEERDGALIEDAATGSGSIEAIYNTINRLMKQDIELIDYRIQAITAGQDAQAEVHVVIKDNNETEFHGIGIDFDVLTASAKAYLQASGKSKSTTKQVDFEEVK.

The Pyruvate carboxyltransferase domain maps to 4-266 (IQFFDTTLRD…ETNIVLNQFK (263 aa)). Residues aspartate 13, histidine 201, histidine 203, and asparagine 237 each contribute to the Mn(2+) site. Residues 390–512 (ELKHLQVQYV…TKQVDFEEVK (123 aa)) form a regulatory domain region.

The protein belongs to the alpha-IPM synthase/homocitrate synthase family. LeuA type 1 subfamily. In terms of assembly, homodimer. Mn(2+) is required as a cofactor.

Its subcellular location is the cytoplasm. It catalyses the reaction 3-methyl-2-oxobutanoate + acetyl-CoA + H2O = (2S)-2-isopropylmalate + CoA + H(+). The protein operates within amino-acid biosynthesis; L-leucine biosynthesis; L-leucine from 3-methyl-2-oxobutanoate: step 1/4. Catalyzes the condensation of the acetyl group of acetyl-CoA with 3-methyl-2-oxobutanoate (2-ketoisovalerate) to form 3-carboxy-3-hydroxy-4-methylpentanoate (2-isopropylmalate). In Listeria welshimeri serovar 6b (strain ATCC 35897 / DSM 20650 / CCUG 15529 / CIP 8149 / NCTC 11857 / SLCC 5334 / V8), this protein is 2-isopropylmalate synthase.